Reading from the N-terminus, the 644-residue chain is Serine/threonine kinase YeaG (644 aa).

This sequence belongs to the PrkA family. Monomer.

It localises to the cytoplasm. It catalyses the reaction L-seryl-[protein] + ATP = O-phospho-L-seryl-[protein] + ADP + H(+). The catalysed reaction is L-threonyl-[protein] + ATP = O-phospho-L-threonyl-[protein] + ADP + H(+). In terms of biological role, kinase that plays a role in the adaptation to sustained nitrogen starvation. The protein is Serine/threonine kinase YeaG (yeaG) of Escherichia coli O157:H7.